We begin with the raw amino-acid sequence, 173 residues long: Co-chaperone protein HscB homolog (173 aa).

In terms of domain architecture, J spans 5–77 (CHFALFELKP…PKRARYLLAM (73 aa)).

This sequence belongs to the HscB family. In terms of assembly, interacts with HscA and stimulates its ATPase activity.

In terms of biological role, co-chaperone involved in the maturation of iron-sulfur cluster-containing proteins. Seems to help targeting proteins to be folded toward HscA. The chain is Co-chaperone protein HscB homolog from Pseudomonas syringae pv. tomato (strain ATCC BAA-871 / DC3000).